We begin with the raw amino-acid sequence, 528 residues long: MSQTSLKKERDPSILILDFGSQYSELIARRIRETNVFSLVVSNFISIEDINRINPKGIILSGGPNSVYEQNAPRCDEKIFNLGIPILGICYGMQLMVKELGGTVISATKKAEYGRAPLNIDQESDLLFDVEDKSIMWMSHGDSINCLPDGFNKIAHTENTLHAAISNDVKKLFGVQFHPEVVHSEFGMRVIKNFVYKISCCTADWTTETYIEETIPRIREQVGNKKVLLALSGGVDSSTLAFLLNKAIGNQLTCMFIDQGFMRKGEPEFLMNFFDKKFHIKVEYINARERFIAKLKGITDPEQKRKIIGEEFIRVFEEESNRLGPFQYLAQGTLYPDVIESAGTNIDPKTGERIAVKIKSHHNVGGLPKDLQFKLVEPLRKLFKDEVRKVGAALGLPDEIIKRHPFPGPGLAIRILGEVNNEKLDCLRDADWIVRDEIKKAGLYNDIWQAFAVLLPVKTVGVMGDKRTYSWPIVLRCVSSEDGMTADWSKIPFQILERIANRIVNEVISVNRVVYDITSKPPGTIEWE.

The Glutamine amidotransferase type-1 domain occupies 13 to 204 (SILILDFGSQ…VYKISCCTAD (192 aa)). Cysteine 90 acts as the Nucleophile in catalysis. Residues histidine 178 and glutamate 180 contribute to the active site. In terms of domain architecture, GMPS ATP-PPase spans 205–403 (WTTETYIEET…LGLPDEIIKR (199 aa)). 232–238 (SGGVDSS) lines the ATP pocket.

Homodimer.

It catalyses the reaction XMP + L-glutamine + ATP + H2O = GMP + L-glutamate + AMP + diphosphate + 2 H(+). It participates in purine metabolism; GMP biosynthesis; GMP from XMP (L-Gln route): step 1/1. Catalyzes the synthesis of GMP from XMP. This Prochlorococcus marinus (strain AS9601) protein is GMP synthase [glutamine-hydrolyzing].